A 570-amino-acid chain; its full sequence is Pentatricopeptide repeat-containing protein At1g31430 (570 aa).

13 PPR repeats span residues 10–44 (SLLM…GLYP), 45–79 (DNFT…GLEF), 80–110 (DSYV…MPQR), 111–141 (DVVS…MSQE), 147–177 (DEGT…VVTE), 181–215 (SVRI…NVKC), 216–242 (WTSM…SPVK), 243–277 (DVVL…GIRP), 278–312 (DNFV…RVTV), 313–343 (DKVV…IKER), 344–378 (DTAS…GVRL), 379–414 (DAIT…NVQP), and 415–449 (KSEH…SDET). The tract at residues 453-528 (VYCSLLSAAR…FPGCSSIEID (76 aa)) is type E motif. The interval 529 to 561 (GVGHEFIVGDDLLSHPKMDEINSMLHQTTNLML) is type E(+) motif.

It belongs to the PPR family. PCMP-E subfamily.

The chain is Pentatricopeptide repeat-containing protein At1g31430 (PCMP-E55) from Arabidopsis thaliana (Mouse-ear cress).